Reading from the N-terminus, the 88-residue chain is Large ribosomal subunit protein bL27 (88 aa).

The tract at residues 1 to 23 (MAHKKAGGSSRNGRDSAGRRLGV) is disordered.

It belongs to the bacterial ribosomal protein bL27 family.

The protein is Large ribosomal subunit protein bL27 of Methylorubrum extorquens (strain CM4 / NCIMB 13688) (Methylobacterium extorquens).